We begin with the raw amino-acid sequence, 503 residues long: Probable cytosol aminopeptidase (503 aa).

The Mn(2+) site is built by Lys-270 and Asp-275. Lys-282 is a catalytic residue. Asp-293, Asp-352, and Glu-354 together coordinate Mn(2+). Arg-356 is a catalytic residue.

Belongs to the peptidase M17 family. The cofactor is Mn(2+).

The protein localises to the cytoplasm. The catalysed reaction is Release of an N-terminal amino acid, Xaa-|-Yaa-, in which Xaa is preferably Leu, but may be other amino acids including Pro although not Arg or Lys, and Yaa may be Pro. Amino acid amides and methyl esters are also readily hydrolyzed, but rates on arylamides are exceedingly low.. The enzyme catalyses Release of an N-terminal amino acid, preferentially leucine, but not glutamic or aspartic acids.. Presumably involved in the processing and regular turnover of intracellular proteins. Catalyzes the removal of unsubstituted N-terminal amino acids from various peptides. The chain is Probable cytosol aminopeptidase from Escherichia fergusonii (strain ATCC 35469 / DSM 13698 / CCUG 18766 / IAM 14443 / JCM 21226 / LMG 7866 / NBRC 102419 / NCTC 12128 / CDC 0568-73).